The following is a 224-amino-acid chain: 7-cyano-7-deazaguanine synthase (224 aa).

7-17 (LSGGLDSSTIL) serves as a coordination point for ATP. Cysteine 191, cysteine 199, cysteine 202, and cysteine 205 together coordinate Zn(2+).

The protein belongs to the QueC family. It depends on Zn(2+) as a cofactor.

The enzyme catalyses 7-carboxy-7-deazaguanine + NH4(+) + ATP = 7-cyano-7-deazaguanine + ADP + phosphate + H2O + H(+). It functions in the pathway purine metabolism; 7-cyano-7-deazaguanine biosynthesis. Its function is as follows. Catalyzes the ATP-dependent conversion of 7-carboxy-7-deazaguanine (CDG) to 7-cyano-7-deazaguanine (preQ(0)). This chain is 7-cyano-7-deazaguanine synthase, found in Nostoc punctiforme (strain ATCC 29133 / PCC 73102).